Here is a 654-residue protein sequence, read N- to C-terminus: Spindle assembly abnormal protein 6 homolog (654 aa).

Positions 39–91 (VHRKDLVIRLTDDTDPFFLYNLVISEEDFQSLKLQQGLLVDFLAFPQKFIDLL) constitute a PISA domain. Positions 175–471 (TRQLHITQET…QLLKNNEKLI (297 aa)) form a coiled coil. A Phosphoserine modification is found at serine 509. Residues 568 to 589 (ASIDGQPGAAVNRPCSNDKENG) are disordered. Serine 612 is modified (phosphoserine). Residues 634–644 (SKPTVLPSSSS) show a composition bias toward low complexity. The interval 634-654 (SKPTVLPSSSSAYFPGQLPSS) is disordered. A Phosphoserine modification is found at serine 654.

In terms of assembly, nine homodimers form a cartwheel structure with an internal diameter of 23 nm and radial spokes connecting to the microtubule triplets. Forms a complex with CPAP and STIL. Interacts with FBXW5. Interacts with NUP62 and TUBG1 at the centrosome. Interacts with CENATAC; the interaction increases with CENATAC acetylation. Interacts with FZR1; the interaction is regulated by CENATAC and leads to SASS6 proteasomal degradation. Ubiquitinated by the SCF(FBXW5) E3 ubiquitin-protein ligase complex during S phase, leading to its degradation and preventing centriole reduplication. Ubiquitinated by the anaphase promoting complex/cyclosome (APC/C) E3 ubiquitin-protein ligase complex, leading to its degradation and preventing centriole reduplication.

The protein localises to the cytoplasm. It is found in the cytoskeleton. Its subcellular location is the microtubule organizing center. It localises to the centrosome. The protein resides in the centriole. Functionally, central scaffolding component of the centrioles ensuring their 9-fold symmetry. Required for centrosome biogenesis and duplication. Required both for mother-centriole-dependent centriole duplication and deuterosome-dependent centriole amplification in multiciliated cells. Not required for centriole formation in embryonic stem cells but necessary to maintain centriole architecture. Required for the recruitment of STIL to the procentriole and for STIL-mediated centriole amplification. The chain is Spindle assembly abnormal protein 6 homolog from Mus musculus (Mouse).